The primary structure comprises 833 residues: Leucine--tRNA ligase (833 aa).

The 'HIGH' region signature appears at Pro41–His52. The 'KMSKS' region signature appears at Lys610–Ser614. Lys613 contacts ATP.

It belongs to the class-I aminoacyl-tRNA synthetase family.

The protein localises to the cytoplasm. The catalysed reaction is tRNA(Leu) + L-leucine + ATP = L-leucyl-tRNA(Leu) + AMP + diphosphate. The sequence is that of Leucine--tRNA ligase from Streptococcus equi subsp. equi (strain 4047).